A 64-amino-acid chain; its full sequence is Bacteriocin plantaricin ASM1 (64 aa).

An N-terminal signal peptide occupies residues 1 to 21; the sequence is MSKLVKTLTVDEISKIQTNGG. A cross-link (lanthionine (Ser-Cys)) is located at residues 61-64; sequence SYHC.

Contains 2 disulfide bonds.

The protein resides in the secreted. In terms of biological role, bacteriocin with a narrow antibacterial spectrum. Antibacterial activity against the Gram-positive bacteria L.plantarun, L.pentosus, L.curvatus, L.lindneri, L.mesenteroides and E.faecilis. Lacks antibacterial activity against the Gram-positive bacteria L.brevis, L.sakei, L.lactis, P.acidilactici, B.subtilis, B.cereus, L.monocytogenes and S.aureus, and against the Gram-negative bacteria E.coli and S.typhimurium. This is Bacteriocin plantaricin ASM1 from Lactiplantibacillus plantarum (Lactobacillus plantarum).